We begin with the raw amino-acid sequence, 168 residues long: NADH dehydrogenase [ubiquinone] 1 alpha subcomplex assembly factor 2 (168 aa).

Basic and acidic residues predominate over residues 108 to 118 (KEKLLQEESNK). Positions 108 to 168 (KEKLLQEESN…MPHGDKGHSQ (61 aa)) are disordered. Ser133 bears the Phosphoserine mark. Residues 144–155 (ESPTSTGKTFQP) are compositionally biased toward polar residues.

This sequence belongs to the complex I NDUFA12 subunit family. Interacts with ARMC9.

Its subcellular location is the mitochondrion. Functionally, acts as a molecular chaperone for mitochondrial complex I assembly. Complex I functions in the transfer of electrons from NADH to the respiratory chain. The immediate electron acceptor for the enzyme is believed to be ubiquinone. Is involved in the initial steps of cilia formation, including removal of CP110 from the mother centrioles, docking of membrane vesicles to the mother centrioles, and establishment of the transition zone. In Bos taurus (Bovine), this protein is NADH dehydrogenase [ubiquinone] 1 alpha subcomplex assembly factor 2 (NDUFAF2).